Consider the following 198-residue polypeptide: Interferon gamma (198 aa).

An N-terminal signal peptide occupies residues methionine 1 to glycine 23. N-linked (GlcNAc...) asparagine glycosylation is found at asparagine 31, asparagine 42, and asparagine 174. The interval serine 173–alanine 198 is disordered. Residues methionine 178–alanine 198 are compositionally biased toward basic residues.

The protein belongs to the type II (or gamma) interferon family. As to quaternary structure, homodimer.

Its subcellular location is the secreted. In terms of biological role, cytokine which binds to interferon gamma receptor 1 (ifngr1). Also binds with lower affinity to interferon gamma receptor 1-like (ifngr1l). Has activating effects on macrophages and neutrophils. This Paralichthys olivaceus (Bastard halibut) protein is Interferon gamma.